A 671-amino-acid chain; its full sequence is DNA ligase (671 aa).

NAD(+)-binding positions include 32–36, 81–82, and glutamate 114; these read DVEYD and SL. The N6-AMP-lysine intermediate role is filled by lysine 116. Residues arginine 137, glutamate 175, lysine 292, and lysine 316 each contribute to the NAD(+) site. Zn(2+) contacts are provided by cysteine 410, cysteine 413, cysteine 428, and cysteine 434. In terms of domain architecture, BRCT spans 592-671; sequence EKNNYFSGKN…AEFYQILGIR (80 aa).

It belongs to the NAD-dependent DNA ligase family. LigA subfamily. Requires Mg(2+) as cofactor. It depends on Mn(2+) as a cofactor.

The enzyme catalyses NAD(+) + (deoxyribonucleotide)n-3'-hydroxyl + 5'-phospho-(deoxyribonucleotide)m = (deoxyribonucleotide)n+m + AMP + beta-nicotinamide D-nucleotide.. DNA ligase that catalyzes the formation of phosphodiester linkages between 5'-phosphoryl and 3'-hydroxyl groups in double-stranded DNA using NAD as a coenzyme and as the energy source for the reaction. It is essential for DNA replication and repair of damaged DNA. The polypeptide is DNA ligase (Baumannia cicadellinicola subsp. Homalodisca coagulata).